Here is a 66-residue protein sequence, read N- to C-terminus: Gas vesicle protein A (66 aa).

The protein belongs to the gas vesicle GvpA family. In terms of assembly, the gas vesicle shell is 2 nm thick and consists of a single layer of this protein. It forms helical ribs nearly perpendicular to the long axis of the vesicle.

It localises to the gas vesicle shell. Gas vesicles are hollow, gas filled proteinaceous nanostructures found in some microorganisms. During planktonic growth they allow positioning of the organism at a favorable depth for light or nutrient acquisition. GvpA forms the protein shell. This Thiocapsa pendens (Amoebobacter pendens) protein is Gas vesicle protein A.